We begin with the raw amino-acid sequence, 259 residues long: BTB/POZ domain-containing protein KCTD4 (259 aa).

Positions 1–22 (MEHKINRREKEKDYEGKHNSLE) are disordered. In terms of domain architecture, BTB spans 33–134 (TLMTLNVGGY…EVKSRWEKEQ (102 aa)).

The sequence is that of BTB/POZ domain-containing protein KCTD4 (KCTD4) from Bos taurus (Bovine).